Here is a 114-residue protein sequence, read N- to C-terminus: PDZK1-interacting protein 1 (114 aa).

Topologically, residues 1–28 are extracellular; sequence MSALSLLILGLLTAVPPASCQQGLGNLQ. Residues 29-51 form a helical membrane-spanning segment; that stretch reads PWMQGLIAVAVFLVLVAIAFAVN. The Cytoplasmic segment spans residues 52 to 114; that stretch reads HFWCQEEPEP…EEGKVRSTPM (63 aa). A Phosphoserine modification is found at Ser85. The tract at residues 94-114 is disordered; the sequence is EHENAYENVPEEEGKVRSTPM. Positions 105–114 are enriched in basic and acidic residues; sequence EEGKVRSTPM.

It belongs to the PDZK1-interacting protein 1/SMIM24 family. Forms a heterodimer (via N-terminal transmembrane helix) with SLC5A2/SGLT2 (via TM13); this interaction enhances SLC5A2 transporter activity. Interacts with PDZK1.

The protein resides in the apical cell membrane. Its function is as follows. Auxiliary protein of electrogenic Na(+)-coupled sugar symporter SLC5A2/SGLT2 and SLC5A1/SGLT1. Essential for the transporter activity of SLC5A2/SGLT2 but not SLC5A1/SGLT1. This is PDZK1-interacting protein 1 from Homo sapiens (Human).